A 425-amino-acid chain; its full sequence is Tryptophan synthase beta chain (425 aa).

An N6-(pyridoxal phosphate)lysine modification is found at Lys-107.

The protein belongs to the TrpB family. Tetramer of two alpha and two beta chains. Pyridoxal 5'-phosphate is required as a cofactor.

The enzyme catalyses (1S,2R)-1-C-(indol-3-yl)glycerol 3-phosphate + L-serine = D-glyceraldehyde 3-phosphate + L-tryptophan + H2O. The protein operates within amino-acid biosynthesis; L-tryptophan biosynthesis; L-tryptophan from chorismate: step 5/5. Functionally, the beta subunit is responsible for the synthesis of L-tryptophan from indole and L-serine. In Synechococcus sp. (strain JA-2-3B'a(2-13)) (Cyanobacteria bacterium Yellowstone B-Prime), this protein is Tryptophan synthase beta chain.